Here is a 426-residue protein sequence, read N- to C-terminus: 3-phosphoshikimate 1-carboxyvinyltransferase (426 aa).

Residues K22, S23, and R27 each coordinate 3-phosphoshikimate. K22 provides a ligand contact to phosphoenolpyruvate. Residues G96 and R124 each coordinate phosphoenolpyruvate. Positions 170, 171, 172, 198, 314, 337, and 341 each coordinate 3-phosphoshikimate. A phosphoenolpyruvate-binding site is contributed by Q172. Residue D314 is the Proton acceptor of the active site. Phosphoenolpyruvate contacts are provided by R345, R387, and K412.

It belongs to the EPSP synthase family. In terms of assembly, monomer.

It localises to the cytoplasm. The catalysed reaction is 3-phosphoshikimate + phosphoenolpyruvate = 5-O-(1-carboxyvinyl)-3-phosphoshikimate + phosphate. Its pathway is metabolic intermediate biosynthesis; chorismate biosynthesis; chorismate from D-erythrose 4-phosphate and phosphoenolpyruvate: step 6/7. Catalyzes the transfer of the enolpyruvyl moiety of phosphoenolpyruvate (PEP) to the 5-hydroxyl of shikimate-3-phosphate (S3P) to produce enolpyruvyl shikimate-3-phosphate and inorganic phosphate. The chain is 3-phosphoshikimate 1-carboxyvinyltransferase from Shewanella pealeana (strain ATCC 700345 / ANG-SQ1).